Reading from the N-terminus, the 105-residue chain is uncharacterized protein (105 aa).

The segment at 81–105 is disordered; the sequence is NNNNKTITVDNNNNNNNNNNNNNNK.

This is an uncharacterized protein from Dictyostelium discoideum (Social amoeba).